A 151-amino-acid polypeptide reads, in one-letter code: Deoxyuridine 5'-triphosphate nucleotidohydrolase (151 aa).

Substrate-binding positions include 70-72, Asn83, 87-89, and Met97; these read RSG and LID.

It belongs to the dUTPase family. It depends on Mg(2+) as a cofactor.

The catalysed reaction is dUTP + H2O = dUMP + diphosphate + H(+). It functions in the pathway pyrimidine metabolism; dUMP biosynthesis; dUMP from dCTP (dUTP route): step 2/2. This enzyme is involved in nucleotide metabolism: it produces dUMP, the immediate precursor of thymidine nucleotides and it decreases the intracellular concentration of dUTP so that uracil cannot be incorporated into DNA. This Pseudomonas paraeruginosa (strain DSM 24068 / PA7) (Pseudomonas aeruginosa (strain PA7)) protein is Deoxyuridine 5'-triphosphate nucleotidohydrolase.